We begin with the raw amino-acid sequence, 449 residues long: Probable hexaprenyl pyrophosphate synthase, mitochondrial (449 aa).

Isopentenyl diphosphate-binding residues include Lys-122, Arg-125, and His-200. Residues Asp-207 and Asp-211 each coordinate Mg(2+). Arg-216 lines the an all-trans-polyprenyl diphosphate pocket. Arg-217 lines the isopentenyl diphosphate pocket. Positions 300, 301, 338, and 355 each coordinate an all-trans-polyprenyl diphosphate.

It belongs to the FPP/GGPP synthase family. Mg(2+) is required as a cofactor.

Its subcellular location is the mitochondrion. It participates in cofactor biosynthesis; ubiquinone biosynthesis. Assembly of polyisoprenoid side chains. The polyprenyl synthase of coenzyme Q biosynthesis catalyzes the formation from isopentenyl diphosphate of all trans-polyprenyl pyrophosphates generally ranging in length of between 6 and 10 isoprene units depending on the species. This Neurospora crassa (strain ATCC 24698 / 74-OR23-1A / CBS 708.71 / DSM 1257 / FGSC 987) protein is Probable hexaprenyl pyrophosphate synthase, mitochondrial.